The primary structure comprises 1007 residues: Protein vav-1 (1007 aa).

In terms of domain architecture, Calponin-homology (CH) spans 37 to 151 (CDLWIGCARW…TLSFLSHTKE (115 aa)). The tract at residues 151 to 239 (ESLSRGVDPF…ENDLQNTPTL (89 aa)) is AC. A disordered region spans residues 153 to 176 (LSRGVDPFPDTDNNQEGTSNGSEF). Polar residues predominate over residues 163-174 (TDNNQEGTSNGS). Phosphotyrosine occurs at positions 183, 200, and 217. Residues 240–437 (KRNRCIRELY…EDVCNYINEE (198 aa)) form the DH domain. The PH domain maps to 470–598 (RVNLDGEVKM…WMTALLLSKS (129 aa)). A Phorbol-ester/DAG-type zinc finger spans residues 610 to 664 (NHKVAFHSFRVDVKNPATCDVCDKLMKGLQYQGYKCESCNMSMHKECLGLKKCEA). An SH3 1 domain is found at 688-750 (HEGDIVVANS…HLDHVSQSRT (63 aa)). Residues 778 to 817 (LPNKLLSDGSSRSLSGPHGSRSSRNSSSSTINGSMDSVPR) are disordered. Low complexity predominate over residues 782 to 814 (LLSDGSSRSLSGPHGSRSSRNSSSSTINGSMDS). An SH2 domain is found at 831–925 (WYMGEMERAK…ALDTCLKNPY (95 aa)). In terms of domain architecture, SH3 2 spans 926–991 (SQCKVFKAVH…PLSYVKPYDP (66 aa)).

GEF activity is regulated by phosphorylation on tyrosine residues. Strong expression in the pharynx, proximal gonad, spermatheca, intestine and rectal epithelia.

Functionally, acts as a guanine nucleotide exchange factor (GEF) for Rho GTPase. Has a critical roles in the generation of rhythmic behaviors: feeding, defecation and ovulation by dynamically regulating the concentration of intracellular calcium. Plays a role in male tail tip morphogenesis. This Caenorhabditis elegans protein is Protein vav-1.